We begin with the raw amino-acid sequence, 538 residues long: Beta-1,4-mannosyl-glycoprotein 4-beta-N-acetylglucosaminyltransferase (538 aa).

Residues 1–7 are Cytoplasmic-facing; sequence MKMRRYK. A helical; Signal-anchor for type II membrane protein transmembrane segment spans residues 8–23; the sequence is LFLMFCMAGLCLISFL. Over 24-538 the chain is Lumenal; sequence HFFKTLSYVT…VRGKLDTAEG (515 aa). Residues 120 to 161 are disordered; that stretch reads PGTRMLEKPSPGRTEEKTEVSEGSSARGPARRPMRHVLSSRE. Asparagine 245, asparagine 263, and asparagine 401 each carry an N-linked (GlcNAc...) asparagine glycan. The segment at 507 to 538 is disordered; it reads REPKSTVEGGRQNQGSDGRSSAVRGKLDTAEG.

It belongs to the glycosyltransferase 17 family. Interacts with MGAT4D. In terms of tissue distribution, highly expressed in brain and kidney and to a much lesser extent in stomach, heart, intestine, uterus, testis, ovary and lung. Not present in spleen, liver and muscle. In brain, expressed in neurons of hippocampus.

Its subcellular location is the golgi apparatus membrane. It carries out the reaction N(4)-{beta-D-GlcNAc-(1-&gt;2)-alpha-D-Man-(1-&gt;3)-[beta-D-GlcNAc-(1-&gt;2)-alpha-D-Man-(1-&gt;6)]-beta-D-Man-(1-&gt;4)-beta-D-GlcNAc-(1-&gt;4)-beta-D-GlcNAc}-L-asparaginyl-[protein] + UDP-N-acetyl-alpha-D-glucosamine = N(4)-{beta-D-GlcNAc-(1-&gt;2)-alpha-D-Man-(1-&gt;3)-[beta-D-GlcNAc-(1-&gt;4)]-[beta-D-GlcNAc-(1-&gt;2)-alpha-D-Man-(1-&gt;6)]-beta-D-Man-(1-&gt;4)-beta-D-GlcNAc-(1-&gt;4)-beta-D-GlcNAc}-L-asparaginyl-[protein] + UDP + H(+). It participates in protein modification; protein glycosylation. In terms of biological role, it is involved in the regulation of the biosynthesis and biological function of glycoprotein oligosaccharides. Catalyzes the addition of N-acetylglucosamine in beta 1-4 linkage to the beta-linked mannose of the trimannosyl core of N-linked sugar chains, called bisecting N-acetylglucosamine (GlcNAc). It is one of the most important enzymes involved in the regulation of the biosynthesis of glycoprotein oligosaccharides. The addition of this bisecting GlcNAc residue alters not only the composition, but also the conformation of the N-glycan. The introduction of the bisecting GlcNAc residue results in the suppression of further processing and elongation of N-glycans, precluding the formation of beta-1,6 GlcNAc branching, catalyzed by MGAT5 since it is unable to use the bisected oligosaccharide as a substrate. Addition of bisecting N-acetylglucosamine to CDH1/E-cadherin modulates CDH1 cell membrane location. Inhibits NeuAc-alpha-2,3-Gal-beta-1,4-GlcNAc- formation which modulates sialylation levels and plays a role in cell migration regulation. In brain, addition of bisecting N-acetylglucosamine to BACE1 blocks its lysosomal targeting in response to oxidative stress and further degradation which increases its location to early endosome and the APP cleavage. The protein is Beta-1,4-mannosyl-glycoprotein 4-beta-N-acetylglucosaminyltransferase of Mus musculus (Mouse).